Consider the following 93-residue polypeptide: Phosphoribosyl-ATP pyrophosphatase (93 aa).

Belongs to the PRA-PH family.

Its subcellular location is the cytoplasm. It catalyses the reaction 1-(5-phospho-beta-D-ribosyl)-ATP + H2O = 1-(5-phospho-beta-D-ribosyl)-5'-AMP + diphosphate + H(+). Its pathway is amino-acid biosynthesis; L-histidine biosynthesis; L-histidine from 5-phospho-alpha-D-ribose 1-diphosphate: step 2/9. In Mycobacterium sp. (strain JLS), this protein is Phosphoribosyl-ATP pyrophosphatase.